Here is a 407-residue protein sequence, read N- to C-terminus: 1-deoxy-D-xylulose 5-phosphate reductoisomerase (407 aa).

The NADPH site is built by threonine 27, glycine 28, serine 29, isoleucine 30, alanine 53, arginine 54, asparagine 55, and asparagine 140. Lysine 141 is a 1-deoxy-D-xylulose 5-phosphate binding site. An NADPH-binding site is contributed by glutamate 142. A Mn(2+)-binding site is contributed by aspartate 166. 4 residues coordinate 1-deoxy-D-xylulose 5-phosphate: serine 167, glutamate 168, serine 192, and histidine 215. Position 168 (glutamate 168) interacts with Mn(2+). Glycine 221 serves as a coordination point for NADPH. The 1-deoxy-D-xylulose 5-phosphate site is built by serine 228, asparagine 233, lysine 234, and glutamate 237. Glutamate 237 provides a ligand contact to Mn(2+).

This sequence belongs to the DXR family. Mg(2+) serves as cofactor. It depends on Mn(2+) as a cofactor.

The catalysed reaction is 2-C-methyl-D-erythritol 4-phosphate + NADP(+) = 1-deoxy-D-xylulose 5-phosphate + NADPH + H(+). The protein operates within isoprenoid biosynthesis; isopentenyl diphosphate biosynthesis via DXP pathway; isopentenyl diphosphate from 1-deoxy-D-xylulose 5-phosphate: step 1/6. In terms of biological role, catalyzes the NADPH-dependent rearrangement and reduction of 1-deoxy-D-xylulose-5-phosphate (DXP) to 2-C-methyl-D-erythritol 4-phosphate (MEP). This is 1-deoxy-D-xylulose 5-phosphate reductoisomerase from Oleidesulfovibrio alaskensis (strain ATCC BAA-1058 / DSM 17464 / G20) (Desulfovibrio alaskensis).